Here is a 126-residue protein sequence, read N- to C-terminus: Small ribosomal subunit protein bS6 (126 aa).

The tract at residues 104–126 (QGAEKGKSSSKKVAAEAEASEEA) is disordered.

It belongs to the bacterial ribosomal protein bS6 family.

Functionally, binds together with bS18 to 16S ribosomal RNA. This chain is Small ribosomal subunit protein bS6, found in Coxiella burnetii (strain Dugway 5J108-111).